We begin with the raw amino-acid sequence, 271 residues long: 4-hydroxy-tetrahydrodipicolinate reductase (271 aa).

Residues 10–15, Glu-36, 100–102, and 124–127 contribute to the NAD(+) site; these read GAGGRM, GTT, and SGNM. The active-site Proton donor/acceptor is His-157. Residue His-158 participates in (S)-2,3,4,5-tetrahydrodipicolinate binding. Lys-161 serves as the catalytic Proton donor. (S)-2,3,4,5-tetrahydrodipicolinate is bound at residue 167 to 168; that stretch reads GT.

Belongs to the DapB family.

The protein resides in the cytoplasm. It catalyses the reaction (S)-2,3,4,5-tetrahydrodipicolinate + NAD(+) + H2O = (2S,4S)-4-hydroxy-2,3,4,5-tetrahydrodipicolinate + NADH + H(+). It carries out the reaction (S)-2,3,4,5-tetrahydrodipicolinate + NADP(+) + H2O = (2S,4S)-4-hydroxy-2,3,4,5-tetrahydrodipicolinate + NADPH + H(+). Its pathway is amino-acid biosynthesis; L-lysine biosynthesis via DAP pathway; (S)-tetrahydrodipicolinate from L-aspartate: step 4/4. Its function is as follows. Catalyzes the conversion of 4-hydroxy-tetrahydrodipicolinate (HTPA) to tetrahydrodipicolinate. The sequence is that of 4-hydroxy-tetrahydrodipicolinate reductase from Rhodopseudomonas palustris (strain ATCC BAA-98 / CGA009).